The primary structure comprises 994 residues: cGMP-dependent protein kinase (994 aa).

The tract at residues M1–K162 is disordered. G2 carries the N-myristoyl glycine lipid modification. The S-palmitoyl cysteine moiety is linked to residue C4. Composition is skewed to low complexity over residues S9 to S22 and G33 to E46. Composition is skewed to basic and acidic residues over residues E65–P80 and E133–K162. CNMP-binding domain regions lie at residues V189–S305, F308–G407, G463–G539, and I561–I660. 3',5'-cyclic GMP is bound by residues G253, E254, A256, R263, and S264. Positions 616, 625, 626, 628, 635, and 636 each coordinate 3',5'-cyclic GMP. One can recognise a Protein kinase domain in the interval L684–F941. ATP-binding positions include V690–V698 and K713. D807 (proton acceptor) is an active-site residue. The region spanning G942–F994 is the AGC-kinase C-terminal domain. Residues L954–L976 form a disordered region. The span at Y965–L976 shows a compositional bias: acidic residues.

The protein belongs to the protein kinase superfamily. AGC Ser/Thr protein kinase family. cGMP subfamily. The cofactor is Mg(2+).

Its subcellular location is the cytoplasm. The protein localises to the membrane. The protein resides in the cell membrane. The catalysed reaction is L-seryl-[protein] + ATP = O-phospho-L-seryl-[protein] + ADP + H(+). It catalyses the reaction L-threonyl-[protein] + ATP = O-phospho-L-threonyl-[protein] + ADP + H(+). Its activity is regulated as follows. Activated by cGMP. The cGMP-binding domains acts cooperatively to activate PKG. Inhibited by the antiparasitic small molecule 4-[2-(4-fluorophenyl)-5-(1-methylpiperidine-4-yl)-1Hpyrrol- 3-yl]pyridine (compound 1). Its function is as follows. Serine/threonine protein kinase which acts as a downstream effector of the second messenger cGMP. Plays an essential role in tachyzoite invasion of and egress from host cells. During invasion of host cells, regulates the apico-basal flux of F-actin probably via Ca(2+)-mediated activation of CDPK1. In tachyzoites, required for microneme secretion. Required for tachyzoite gliding motility. Plays an essential role in parasite invasion of and egress from host cells, and microneme secretion. Functionally, dispensable for parasite invasion of and egress from host cells, and microneme secretion. The polypeptide is cGMP-dependent protein kinase (Toxoplasma gondii).